The following is a 342-amino-acid chain: N-acetyl-gamma-glutamyl-phosphate reductase (342 aa).

Cys-146 is a catalytic residue.

Belongs to the NAGSA dehydrogenase family. Type 1 subfamily.

It is found in the cytoplasm. It carries out the reaction N-acetyl-L-glutamate 5-semialdehyde + phosphate + NADP(+) = N-acetyl-L-glutamyl 5-phosphate + NADPH + H(+). The protein operates within amino-acid biosynthesis; L-arginine biosynthesis; N(2)-acetyl-L-ornithine from L-glutamate: step 3/4. Its function is as follows. Catalyzes the NADPH-dependent reduction of N-acetyl-5-glutamyl phosphate to yield N-acetyl-L-glutamate 5-semialdehyde. The sequence is that of N-acetyl-gamma-glutamyl-phosphate reductase from Streptomyces avermitilis (strain ATCC 31267 / DSM 46492 / JCM 5070 / NBRC 14893 / NCIMB 12804 / NRRL 8165 / MA-4680).